Reading from the N-terminus, the 229-residue chain is UPF0758 protein Mbur_0382 (229 aa).

Positions 106–228 constitute an MPN domain; sequence KIRSANDVYS…YVSLKEEGYI (123 aa). Positions 177, 179, and 190 each coordinate Zn(2+). Positions 177–190 match the JAMM motif motif; that stretch reads HNHPSGDPAPSRED.

Belongs to the UPF0758 family.

In Methanococcoides burtonii (strain DSM 6242 / NBRC 107633 / OCM 468 / ACE-M), this protein is UPF0758 protein Mbur_0382.